Reading from the N-terminus, the 631-residue chain is tRNA uridine 5-carboxymethylaminomethyl modification enzyme MnmG (631 aa).

FAD-binding positions include 13 to 18 (GGGHAG), V125, and S180. 273–287 (GPRYCPSIEDKVMRF) provides a ligand contact to NAD(+). Residue Q370 participates in FAD binding.

Belongs to the MnmG family. As to quaternary structure, homodimer. Heterotetramer of two MnmE and two MnmG subunits. The cofactor is FAD.

Its subcellular location is the cytoplasm. Functionally, NAD-binding protein involved in the addition of a carboxymethylaminomethyl (cmnm) group at the wobble position (U34) of certain tRNAs, forming tRNA-cmnm(5)s(2)U34. This Vibrio campbellii (strain ATCC BAA-1116) protein is tRNA uridine 5-carboxymethylaminomethyl modification enzyme MnmG.